The chain runs to 141 residues: Hemoglobin subunit alpha (141 aa).

Residues 1 to 141 form the Globin domain; it reads VLSPADKTNV…VSTVLTSKYR (141 aa). S3 carries the post-translational modification Phosphoserine. Position 7 is an N6-succinyllysine (K7). T8 is subject to Phosphothreonine. K11 carries the post-translational modification N6-succinyllysine. K16 bears the N6-acetyllysine; alternate mark. K16 bears the N6-succinyllysine; alternate mark. At Y24 the chain carries Phosphotyrosine. Phosphoserine is present on S35. K40 carries the post-translational modification N6-succinyllysine. Phosphoserine is present on S49. H58 is an O2 binding site. H87 lines the heme b pocket. The residue at position 102 (S102) is a Phosphoserine. The residue at position 108 (T108) is a Phosphothreonine. A Phosphoserine modification is found at S124. Phosphothreonine occurs at positions 134 and 137. A Phosphoserine modification is found at S138.

This sequence belongs to the globin family. In terms of assembly, heterotetramer of two alpha chains and two beta chains. As to expression, red blood cells.

In terms of biological role, involved in oxygen transport from the lung to the various peripheral tissues. Functionally, hemopressin acts as an antagonist peptide of the cannabinoid receptor CNR1. Hemopressin-binding efficiently blocks cannabinoid receptor CNR1 and subsequent signaling. This chain is Hemoglobin subunit alpha (HBA), found in Pteronura brasiliensis (Giant otter).